The sequence spans 383 residues: 6-hydroxynicotinate 3-monooxygenase (383 aa).

Positions 1 to 26 (MQGKPRIAVIGAGLGGTAGAALMARA) are cleaved as a signal peptide. Residues glycine 15, 34–35 (EQ), histidine 47, arginine 108, and leucine 130 contribute to the FAD site. Histidine 47 functions as the Proton acceptor in the catalytic mechanism. The active-site Proton acceptor is the tyrosine 214. FAD contacts are provided by residues aspartate 293 and 306-307 (AA).

The protein belongs to the 6-hydroxynicotinate 3-monooxygenase family. Monomer. Requires FAD as cofactor.

It catalyses the reaction 6-hydroxynicotinate + NADH + O2 + 2 H(+) = 2,5-dihydroxypyridine + CO2 + NAD(+) + H2O. It participates in cofactor degradation; nicotinate degradation. Its activity is regulated as follows. Competitively inhibited by 6-hydroxynicotinaldehyde. Its function is as follows. Flavin-dependent monooxygenase (FMO) that catalyzes the decarboxylative hydroxylation of 6-hydroxynicotinic acid (6-HNA) to 2,5-dihydroxypyridine (2,5-DHP) with concomitant oxidation of NADH, a step in the aerobic nicotinate degradation pathway. Is also active on the non-natural substrate 5-chloro-6-hydroxynicotinate, and is much less efficient on the substrate analog 4-hydroxybenzoate. In Bordetella bronchiseptica (strain ATCC BAA-588 / NCTC 13252 / RB50) (Alcaligenes bronchisepticus), this protein is 6-hydroxynicotinate 3-monooxygenase.